Here is a 415-residue protein sequence, read N- to C-terminus: Zinc finger protein ZFMSA12A (415 aa).

The tract at residues 1–36 (MGIQDARWPSEDEETHLLDSSSAEQTRGEKCSDSTP) is disordered. C2H2-type zinc fingers lie at residues 78–100 (HKCT…QRLH), 106–129 (YRCS…RTQC), 134–156 (YICI…QCVH), 161–183 (FDCS…ELTH), 189–211 (FTCR…QKIH), 217–239 (NQCM…EVRH), 245–267 (QICA…MRSH), 273–295 (FQCT…VRTH), 301–323 (YLCS…RRTH), 329–351 (YKCS…MRVH), 357–379 (YVCS…SMNH), and 385–407 (YACQ…LKTH).

Its subcellular location is the nucleus. The sequence is that of Zinc finger protein ZFMSA12A from Micropterus salmoides (Largemouth bass).